We begin with the raw amino-acid sequence, 321 residues long: tRNA dimethylallyltransferase (321 aa).

24 to 31 (GPTASGKS) provides a ligand contact to ATP. A substrate-binding site is contributed by 26-31 (TASGKS). Interaction with substrate tRNA stretches follow at residues 49–52 (DSMQ) and 172–176 (QRIVR).

This sequence belongs to the IPP transferase family. As to quaternary structure, monomer. It depends on Mg(2+) as a cofactor.

The catalysed reaction is adenosine(37) in tRNA + dimethylallyl diphosphate = N(6)-dimethylallyladenosine(37) in tRNA + diphosphate. In terms of biological role, catalyzes the transfer of a dimethylallyl group onto the adenine at position 37 in tRNAs that read codons beginning with uridine, leading to the formation of N6-(dimethylallyl)adenosine (i(6)A). This Mesorhizobium japonicum (strain LMG 29417 / CECT 9101 / MAFF 303099) (Mesorhizobium loti (strain MAFF 303099)) protein is tRNA dimethylallyltransferase.